The following is a 258-amino-acid chain: UPF0246 protein Jann_0444 (258 aa).

This sequence belongs to the UPF0246 family.

The protein is UPF0246 protein Jann_0444 of Jannaschia sp. (strain CCS1).